Reading from the N-terminus, the 254-residue chain is Glucosamine-6-phosphate deaminase (254 aa).

Residue aspartate 67 is the Proton acceptor; for enolization step of the active site. Asparagine 136 acts as the For ring-opening step in catalysis. Catalysis depends on histidine 138, which acts as the Proton acceptor; for ring-opening step. The active-site For ring-opening step is glutamate 143.

Belongs to the glucosamine/galactosamine-6-phosphate isomerase family. NagB subfamily.

The enzyme catalyses alpha-D-glucosamine 6-phosphate + H2O = beta-D-fructose 6-phosphate + NH4(+). The protein operates within amino-sugar metabolism; N-acetylneuraminate degradation; D-fructose 6-phosphate from N-acetylneuraminate: step 5/5. Catalyzes the reversible isomerization-deamination of glucosamine 6-phosphate (GlcN6P) to form fructose 6-phosphate (Fru6P) and ammonium ion. This chain is Glucosamine-6-phosphate deaminase, found in Brevibacillus brevis (strain 47 / JCM 6285 / NBRC 100599).